Here is a 261-residue protein sequence, read N- to C-terminus: Thiazole synthase (261 aa).

The Schiff-base intermediate with DXP role is filled by K101. 1-deoxy-D-xylulose 5-phosphate-binding positions include G162, A188–G189, and N210–T211.

The protein belongs to the ThiG family. As to quaternary structure, homotetramer. Forms heterodimers with either ThiH or ThiS.

It localises to the cytoplasm. It catalyses the reaction [ThiS sulfur-carrier protein]-C-terminal-Gly-aminoethanethioate + 2-iminoacetate + 1-deoxy-D-xylulose 5-phosphate = [ThiS sulfur-carrier protein]-C-terminal Gly-Gly + 2-[(2R,5Z)-2-carboxy-4-methylthiazol-5(2H)-ylidene]ethyl phosphate + 2 H2O + H(+). It functions in the pathway cofactor biosynthesis; thiamine diphosphate biosynthesis. Functionally, catalyzes the rearrangement of 1-deoxy-D-xylulose 5-phosphate (DXP) to produce the thiazole phosphate moiety of thiamine. Sulfur is provided by the thiocarboxylate moiety of the carrier protein ThiS. In vitro, sulfur can be provided by H(2)S. The polypeptide is Thiazole synthase (Aromatoleum aromaticum (strain DSM 19018 / LMG 30748 / EbN1) (Azoarcus sp. (strain EbN1))).